The primary structure comprises 346 residues: NADH-ubiquinone oxidoreductase chain 2 (346 aa).

11 helical membrane passes run Met1–Ile21, His25–Ser45, Phe60–Ala80, Cys95–Phe115, Leu124–Met144, Leu149–Gly169, Ile178–Val195, Leu200–Leu219, Ala242–Pro262, Glu274–Leu294, and Ala326–Val346.

The protein belongs to the complex I subunit 2 family.

The protein resides in the mitochondrion inner membrane. The enzyme catalyses a ubiquinone + NADH + 5 H(+)(in) = a ubiquinol + NAD(+) + 4 H(+)(out). Core subunit of the mitochondrial membrane respiratory chain NADH dehydrogenase (Complex I) that is believed to belong to the minimal assembly required for catalysis. Complex I functions in the transfer of electrons from NADH to the respiratory chain. The immediate electron acceptor for the enzyme is believed to be ubiquinone. This chain is NADH-ubiquinone oxidoreductase chain 2 (MT-ND2), found in Mareca falcata (Falcated duck).